Here is a 284-residue protein sequence, read N- to C-terminus: MTVNNEISKAFSKHADDYERVAKVQKEIGSRLFERLQYLKIAPRRILDLGCGPGFFSKELALLYPKAQIVGMDLSFAMLEQARKKQGWRRKWPLVSADMQKMPFATGAFDLVFANQVIHWSSSLGMVFRELNRVMNVNGCLMFTTLGPDTFKELQTAWSAANQYAHVNEFVDMHDIGDCLIAEHFMDPVIDMELLSIHYETLPQLLLALKTQGVRNINPKRNHGLTGKSAWKQFEAQYATMRTTTGKYPLTYEVVYGQAWKGAQRKMEQGIETWIPVSRVVKKS.

The protein belongs to the methyltransferase superfamily.

The enzyme catalyses malonyl-[ACP] + S-adenosyl-L-methionine = malonyl-[ACP] methyl ester + S-adenosyl-L-homocysteine. Its pathway is cofactor biosynthesis; biotin biosynthesis. Converts the free carboxyl group of a malonyl-thioester to its methyl ester by transfer of a methyl group from S-adenosyl-L-methionine (SAM). It allows to synthesize pimeloyl-ACP via the fatty acid synthetic pathway. In Legionella pneumophila subsp. pneumophila (strain Philadelphia 1 / ATCC 33152 / DSM 7513), this protein is Malonyl-[acyl-carrier protein] O-methyltransferase.